We begin with the raw amino-acid sequence, 270 residues long: Hematopoietically-expressed homeobox protein HHEX (270 aa).

The segment at 1–137 is interaction with SOX13; that stretch reads MQYPHPGPAA…PFLQRPLHKR (137 aa). Phosphoserine is present on serine 53. Residues 137 to 196 constitute a DNA-binding region (homeobox); sequence RKGGQVRFSNDQTIELEKKFETQKYLSPPERKRLAKMLQLSERQVKTWFQNRRAKWRRLK. The required for WNT signaling induction stretch occupies residues 137 to 270; that stretch reads RKGGQVRFSN…EGDKSYFNAG (134 aa). A disordered region spans residues 194–270; sequence RLKQENPQSN…EGDKSYFNAG (77 aa). Over residues 222 to 241 the composition is skewed to polar residues; it reads PSEQNKGASLDSSQCSPSPA. Residues 244 to 260 are compositionally biased toward acidic residues; that stretch reads EDLESEISEDSDQEVDI.

As to quaternary structure, interacts with CD81; the interaction prevents nuclear translocation of HHEX. Interacts (via N-terminus) with SOX13; abolishes the SOX13-mediated inhibition of WNT-mediated transcriptional activity via competitive inhibition of the SOX13-TCF7 complex. Interacts with EIF4E; the interaction inhibits EIF4E-mediated mRNA nuclear export. As to expression, liver and promyelocytic leukemia cell line HL-60.

It localises to the nucleus. It is found in the nuclear body. The protein resides in the cytoplasm. Functionally, recognizes the DNA sequence 5'-ATTAA-3'. Transcriptional repressor. Activator of WNT-mediated transcription in conjunction with CTNNB1. Establishes anterior identity at two levels; acts early to enhance canonical WNT-signaling by repressing expression of TLE4, and acts later to inhibit NODAL-signaling by directly targeting NODAL. Inhibits EIF4E-mediated mRNA nuclear export. May play a role in hematopoietic differentiation. The protein is Hematopoietically-expressed homeobox protein HHEX (HHEX) of Homo sapiens (Human).